A 165-amino-acid polypeptide reads, in one-letter code: Small ribosomal subunit protein uS5 (165 aa).

In terms of domain architecture, S5 DRBM spans 10–73 (LKEKVVHINR…EDAKKNIVEV (64 aa)).

Belongs to the universal ribosomal protein uS5 family. Part of the 30S ribosomal subunit. Contacts proteins S4 and S8.

Its function is as follows. With S4 and S12 plays an important role in translational accuracy. Located at the back of the 30S subunit body where it stabilizes the conformation of the head with respect to the body. The protein is Small ribosomal subunit protein uS5 of Clostridium botulinum (strain ATCC 19397 / Type A).